The chain runs to 241 residues: Beta-nerve growth factor (241 aa).

The first 18 residues, 1 to 18 (MSMLFYTLITAFLIGIQA), serve as a signal peptide directing secretion. Positions 19–121 (EPHSESNVPA…PVNRTHRSKR (103 aa)) are excised as a propeptide. Residues N69, N114, and N166 are each glycosylated (N-linked (GlcNAc...) asparagine). Cystine bridges form between C136–C201, C179–C229, and C189–C231.

The protein belongs to the NGF-beta family. As to quaternary structure, homodimer. The homodimer interacts with a single NTRK1 chain. The homodimer interacts with a single NGFR chain. The NGF dimer interacts with a single SORCS2 chain (via extracellular domain). The NGF precursor (proNGF) binds to a receptor complex formed by SORT1 and NGFR, which leads to NGF endocytosis. Both mature NGF and the immature NGF precursor (proNGF) interact with SORCS2 and with the heterodimer formed by SORCS2 and NGFR (via extracellular domains). The NGF precursor (proNGF) has much higher affinity for SORCS2 than mature NGF. The NGF precursor (proNGF) has much higher affinity for SORT1 than mature NGF. Interacts with ADAM10 in a divalent cation-dependent manner. Interacts with SORCS3.

The protein localises to the secreted. It is found in the endosome lumen. Functionally, nerve growth factor is important for the development and maintenance of the sympathetic and sensory nervous systems. Extracellular ligand for the NTRK1 and NGFR receptors, activates cellular signaling cascades through those receptor tyrosine kinase to regulate neuronal proliferation, differentiation and survival. Inhibits metalloproteinase dependent proteolysis of platelet glycoprotein VI. The sequence is that of Beta-nerve growth factor (NGF) from Saimiri boliviensis boliviensis (Bolivian squirrel monkey).